Consider the following 207-residue polypeptide: Ribonuclease HII (207 aa).

The 203-residue stretch at Pro-5 to Cys-207 folds into the RNase H type-2 domain. A divalent metal cation-binding residues include Asp-11, Glu-12, and Asp-117.

It belongs to the RNase HII family. It depends on Mn(2+) as a cofactor. Mg(2+) serves as cofactor.

The protein resides in the cytoplasm. It carries out the reaction Endonucleolytic cleavage to 5'-phosphomonoester.. Endonuclease that specifically degrades the RNA of RNA-DNA hybrids. This chain is Ribonuclease HII, found in Hyphomonas neptunium (strain ATCC 15444).